Here is a 218-residue protein sequence, read N- to C-terminus: Peptidyl-tRNA hydrolase (218 aa).

Residue tyrosine 19 coordinates tRNA. Histidine 24 functions as the Proton acceptor in the catalytic mechanism. TRNA is bound by residues tyrosine 68, asparagine 70, and asparagine 116. A disordered region spans residues 181-218; it reads WNTATQRLNARPAPPKPPKAPKAPQPAAADQPKDESQP. Residues 192–204 show a composition bias toward pro residues; sequence PAPPKPPKAPKAP.

The protein belongs to the PTH family. In terms of assembly, monomer.

Its subcellular location is the cytoplasm. The enzyme catalyses an N-acyl-L-alpha-aminoacyl-tRNA + H2O = an N-acyl-L-amino acid + a tRNA + H(+). Functionally, hydrolyzes ribosome-free peptidyl-tRNAs (with 1 or more amino acids incorporated), which drop off the ribosome during protein synthesis, or as a result of ribosome stalling. In terms of biological role, catalyzes the release of premature peptidyl moieties from peptidyl-tRNA molecules trapped in stalled 50S ribosomal subunits, and thus maintains levels of free tRNAs and 50S ribosomes. The sequence is that of Peptidyl-tRNA hydrolase from Azoarcus sp. (strain BH72).